Reading from the N-terminus, the 447-residue chain is Na(+)-translocating NADH-quinone reductase subunit A (447 aa).

The protein belongs to the NqrA family. Composed of six subunits; NqrA, NqrB, NqrC, NqrD, NqrE and NqrF.

The catalysed reaction is a ubiquinone + n Na(+)(in) + NADH + H(+) = a ubiquinol + n Na(+)(out) + NAD(+). NQR complex catalyzes the reduction of ubiquinone-1 to ubiquinol by two successive reactions, coupled with the transport of Na(+) ions from the cytoplasm to the periplasm. NqrA to NqrE are probably involved in the second step, the conversion of ubisemiquinone to ubiquinol. The protein is Na(+)-translocating NADH-quinone reductase subunit A of Yersinia pestis.